The sequence spans 498 residues: Actin-binding protein WASF2 (498 aa).

Disordered stretches follow at residues 173-203 (KEKR…KEEW) and 240-435 (NVDA…AVSD). Low complexity predominate over residues 252 to 263 (SDSASSPSPSFS). Residues 298-407 (SHPPPAPPLG…PPPGPPPPPF (110 aa)) are compositionally biased toward pro residues. The region spanning 436 to 453 (ARSDLLSAIRQGFQLRRV) is the WH2 domain. Ser-474 carries the post-translational modification Phosphoserine.

The protein belongs to the SCAR/WAVE family. As to quaternary structure, binds actin and the Arp2/3 complex. Interacts with BAIAP2. Component of the WAVE2 complex composed of ABI1, CYFIP1/SRA1, NCKAP1/NAP1 (NCKAP1l/HEM1 in hematopoietic cells) and WASF2/WAVE2. Directly interacts with BRK1. Interacts with FNBP1L (via the SH3 domain). In terms of assembly, (Microbial infection) Interacts with human cytomegalovirus protein UL135. As to expression, expressed in all tissues with strongest expression in placenta, lung, and peripheral blood leukocytes, but not in skeletal muscle.

The protein localises to the cytoplasm. It is found in the cytoskeleton. It localises to the cell projection. The protein resides in the lamellipodium. Its subcellular location is the basolateral cell membrane. In terms of biological role, downstream effector molecule involved in the transmission of signals from tyrosine kinase receptors and small GTPases to the actin cytoskeleton. Promotes formation of actin filaments. Part of the WAVE complex that regulates lamellipodia formation. The WAVE complex regulates actin filament reorganization via its interaction with the Arp2/3 complex. The chain is Actin-binding protein WASF2 from Homo sapiens (Human).